Reading from the N-terminus, the 514-residue chain is Peptide chain release factor 3 (514 aa).

A tr-type G domain is found at 8-268; sequence KKRRTFAIIS…IFLKFAPEPH (261 aa). GTP-binding positions include 17–24, 85–89, and 139–142; these read SHPDAGKT, DTPGH, and NKLD.

Belongs to the TRAFAC class translation factor GTPase superfamily. Classic translation factor GTPase family. PrfC subfamily.

It localises to the cytoplasm. Increases the formation of ribosomal termination complexes and stimulates activities of RF-1 and RF-2. It binds guanine nucleotides and has strong preference for UGA stop codons. It may interact directly with the ribosome. The stimulation of RF-1 and RF-2 is significantly reduced by GTP and GDP, but not by GMP. In Streptococcus pneumoniae (strain 70585), this protein is Peptide chain release factor 3.